A 177-amino-acid polypeptide reads, in one-letter code: Adenine phosphoribosyltransferase (177 aa).

It belongs to the purine/pyrimidine phosphoribosyltransferase family. In terms of assembly, homodimer.

The protein resides in the cytoplasm. The catalysed reaction is AMP + diphosphate = 5-phospho-alpha-D-ribose 1-diphosphate + adenine. It participates in purine metabolism; AMP biosynthesis via salvage pathway; AMP from adenine: step 1/1. Functionally, catalyzes a salvage reaction resulting in the formation of AMP, that is energically less costly than de novo synthesis. The chain is Adenine phosphoribosyltransferase from Acidothermus cellulolyticus (strain ATCC 43068 / DSM 8971 / 11B).